The following is a 213-amino-acid chain: Holliday junction resolvase RecU (213 aa).

Mg(2+) is bound by residues threonine 99, aspartate 101, glutamate 114, and glutamine 133.

This sequence belongs to the RecU family. Mg(2+) is required as a cofactor.

It localises to the cytoplasm. The enzyme catalyses Endonucleolytic cleavage at a junction such as a reciprocal single-stranded crossover between two homologous DNA duplexes (Holliday junction).. In terms of biological role, endonuclease that resolves Holliday junction intermediates in genetic recombination. Cleaves mobile four-strand junctions by introducing symmetrical nicks in paired strands. Promotes annealing of linear ssDNA with homologous dsDNA. Required for DNA repair, homologous recombination and chromosome segregation. This chain is Holliday junction resolvase RecU, found in Lactococcus lactis subsp. cremoris (strain SK11).